Reading from the N-terminus, the 366-residue chain is N-acetyl-L-citrulline deacetylase (366 aa).

Co(2+) is bound by residues histidine 72 and aspartate 103. The active-site Proton donor/acceptor is the glutamate 130. A Co(2+)-binding site is contributed by glutamate 155.

Belongs to the peptidase M20A family. N-acetylcitrulline deacetylase subfamily. In terms of assembly, forms homodimers in the crystal, but higher order oligomers may form in solution. The cofactor is Co(2+).

The enzyme catalyses N(2)-acetyl-L-citrulline + H2O = L-citrulline + acetate. The catalysed reaction is N(2)-acetyl-L-ornithine + H2O = L-ornithine + acetate. The protein operates within amino-acid biosynthesis; L-arginine biosynthesis. Its function is as follows. Catalyzes the deacetylation of N-acetyl-L-citrulline to produce L-citrulline. This is a step in an alternative arginine biosynthesis pathway. Is also able to catalyze the deacetylation of N-acetylornithine in vitro, with almost equal velocity. However, this reaction may be not relevant in vivo since Xanthomonas does not possess the canonical argF gene and cannot convert ornithine to citrulline via ArgF'. This Xanthomonas campestris pv. campestris (strain ATCC 33913 / DSM 3586 / NCPPB 528 / LMG 568 / P 25) protein is N-acetyl-L-citrulline deacetylase.